Reading from the N-terminus, the 60-residue chain is Cytotoxin 8 (60 aa).

4 disulfides stabilise this stretch: Cys3–Cys21, Cys14–Cys38, Cys42–Cys53, and Cys54–Cys59.

This sequence belongs to the three-finger toxin family. Short-chain subfamily. Type IA cytotoxin sub-subfamily. Monomer in solution; Homodimer and oligomer in the presence of negatively charged lipids forming a pore with a size ranging between 20 and 30 Angstroms. Expressed by the venom gland.

Its subcellular location is the secreted. It is found in the target cell membrane. In terms of biological role, shows cytolytic activity on many different cells by forming pore in lipid membranes. In vivo, increases heart rate or kills the animal by cardiac arrest. In addition, it binds to heparin with high affinity, interacts with Kv channel-interacting protein 1 (KCNIP1) in a calcium-independent manner, and binds to integrin alpha-V/beta-3 (ITGAV/ITGB3) with moderate affinity. The protein is Cytotoxin 8 of Naja annulifera (Banded Egyptian cobra).